The chain runs to 48 residues: Bacteriochlorophyll c-binding protein (48 aa).

Position 25 (histidine 25) interacts with a bacteriochlorophyll c.

Belongs to the BChl C/E-binding protein family.

Its subcellular location is the chlorosome. The protein localises to the chlorosome envelope. In terms of biological role, component of the photosynthetic apparatus. The light harvesting B740 complex binds bacteriochlorophyll c. The protein is Bacteriochlorophyll c-binding protein (csmA) of Chlorobaculum thiosulfatiphilum (Chlorobium limicola f.sp. thiosulfatophilum).